The chain runs to 178 residues: Cytochrome b6-f complex iron-sulfur subunit 1 (178 aa).

Residues 17–36 (LLNFLAGTTVAVTASAGAYA) form a helical membrane-spanning segment. The Rieske domain occupies 61–161 (GNPIPASQIL…VAVVDDQIFI (101 aa)). Residues cysteine 107, histidine 109, cysteine 125, and histidine 128 each coordinate [2Fe-2S] cluster. A disulfide bond links cysteine 112 and cysteine 127.

This sequence belongs to the Rieske iron-sulfur protein family. In terms of assembly, the 4 large subunits of the cytochrome b6-f complex are cytochrome b6, subunit IV (17 kDa polypeptide, PetD), cytochrome f and the Rieske protein, while the 4 small subunits are PetG, PetL, PetM and PetN. The complex functions as a dimer. The cofactor is [2Fe-2S] cluster.

It is found in the cellular thylakoid membrane. The enzyme catalyses 2 oxidized [plastocyanin] + a plastoquinol + 2 H(+)(in) = 2 reduced [plastocyanin] + a plastoquinone + 4 H(+)(out). Its function is as follows. Component of the cytochrome b6-f complex, which mediates electron transfer between photosystem II (PSII) and photosystem I (PSI), cyclic electron flow around PSI, and state transitions. This is Cytochrome b6-f complex iron-sulfur subunit 1 from Synechocystis sp. (strain ATCC 27184 / PCC 6803 / Kazusa).